Consider the following 228-residue polypeptide: ATP synthase subunit a (228 aa).

A run of 7 helical transmembrane segments spans residues 16–36 (GQEW…FIIA), 45–65 (LVPT…ISMG), 80–100 (LIGS…IPGF), 106–126 (NINF…YLGI), 138–158 (FMGP…ISHL), 178–198 (FLMV…FFLL), and 201–221 (FGVL…AGSI).

The protein belongs to the ATPase A chain family. In terms of assembly, F-type ATPases have 2 components, CF(1) - the catalytic core - and CF(0) - the membrane proton channel. CF(1) has five subunits: alpha(3), beta(3), gamma(1), delta(1), epsilon(1). CF(0) has three main subunits: a(1), b(2) and c(9-12). The alpha and beta chains form an alternating ring which encloses part of the gamma chain. CF(1) is attached to CF(0) by a central stalk formed by the gamma and epsilon chains, while a peripheral stalk is formed by the delta and b chains.

The protein resides in the cell inner membrane. Key component of the proton channel; it plays a direct role in the translocation of protons across the membrane. This chain is ATP synthase subunit a, found in Aliarcobacter butzleri (strain RM4018) (Arcobacter butzleri).